The primary structure comprises 287 residues: Elongation factor Ts (287 aa).

The interval 81–84 (TDFV) is involved in Mg(2+) ion dislocation from EF-Tu.

This sequence belongs to the EF-Ts family.

The protein resides in the cytoplasm. Its function is as follows. Associates with the EF-Tu.GDP complex and induces the exchange of GDP to GTP. It remains bound to the aminoacyl-tRNA.EF-Tu.GTP complex up to the GTP hydrolysis stage on the ribosome. The protein is Elongation factor Ts of Nitratidesulfovibrio vulgaris (strain ATCC 29579 / DSM 644 / CCUG 34227 / NCIMB 8303 / VKM B-1760 / Hildenborough) (Desulfovibrio vulgaris).